The sequence spans 366 residues: Alanine racemase (366 aa).

The active-site Proton acceptor; specific for D-alanine is Lys-40. At Lys-40 the chain carries N6-(pyridoxal phosphate)lysine. Arg-136 contacts substrate. Tyr-263 acts as the Proton acceptor; specific for L-alanine in catalysis. Met-310 is a substrate binding site.

The protein belongs to the alanine racemase family. The cofactor is pyridoxal 5'-phosphate.

It carries out the reaction L-alanine = D-alanine. It functions in the pathway amino-acid biosynthesis; D-alanine biosynthesis; D-alanine from L-alanine: step 1/1. Its function is as follows. Catalyzes the interconversion of L-alanine and D-alanine. May also act on other amino acids. The protein is Alanine racemase (alr) of Streptococcus pyogenes serotype M1.